Here is a 403-residue protein sequence, read N- to C-terminus: Acetate kinase (403 aa).

Asn-7 contributes to the Mg(2+) binding site. Residue Lys-14 participates in ATP binding. Arg-90 contacts substrate. Asp-147 acts as the Proton donor/acceptor in catalysis. Residues 207-211, 283-285, and 331-335 each bind ATP; these read HIGNG, DMR, and GVGEN. Position 386 (Glu-386) interacts with Mg(2+).

Belongs to the acetokinase family. As to quaternary structure, homodimer. Mg(2+) is required as a cofactor. It depends on Mn(2+) as a cofactor.

It localises to the cytoplasm. It catalyses the reaction acetate + ATP = acetyl phosphate + ADP. The protein operates within metabolic intermediate biosynthesis; acetyl-CoA biosynthesis; acetyl-CoA from acetate: step 1/2. Functionally, catalyzes the formation of acetyl phosphate from acetate and ATP. Can also catalyze the reverse reaction. The chain is Acetate kinase from Thermotoga sp. (strain RQ2).